The primary structure comprises 448 residues: Probable glycine dehydrogenase (decarboxylating) subunit 1 (448 aa).

This sequence belongs to the GcvP family. N-terminal subunit subfamily. The glycine cleavage system is composed of four proteins: P, T, L and H. In this organism, the P 'protein' is a heterodimer of two subunits.

It carries out the reaction N(6)-[(R)-lipoyl]-L-lysyl-[glycine-cleavage complex H protein] + glycine + H(+) = N(6)-[(R)-S(8)-aminomethyldihydrolipoyl]-L-lysyl-[glycine-cleavage complex H protein] + CO2. Its function is as follows. The glycine cleavage system catalyzes the degradation of glycine. The P protein binds the alpha-amino group of glycine through its pyridoxal phosphate cofactor; CO(2) is released and the remaining methylamine moiety is then transferred to the lipoamide cofactor of the H protein. The polypeptide is Probable glycine dehydrogenase (decarboxylating) subunit 1 (Thermomicrobium roseum (strain ATCC 27502 / DSM 5159 / P-2)).